Reading from the N-terminus, the 279-residue chain is Pleckstrin homology domain-containing family F member 1 (279 aa).

The PH domain maps to Val-35 to Arg-131. The FYVE-type zinc finger occupies Asp-152 to Ala-212. Positions 158, 161, 175, 178, 183, 186, 204, and 207 each coordinate Zn(2+). A disordered region spans residues Glu-218–Ser-264. Acidic residues predominate over residues Gly-244–Lys-253.

In terms of tissue distribution, highly expressed in heart and skeletal muscle. Weakly expressed in brain, thymus, spleen, kidney, liver, small intestine, placenta and lung.

It localises to the nucleus. The protein localises to the cytoplasm. It is found in the perinuclear region. Its subcellular location is the lysosome. May induce apoptosis through the lysosomal-mitochondrial pathway. Translocates to the lysosome initiating the permeabilization of lysosomal membrane (LMP) and resulting in the release of CTSD and CTSL to the cytoplasm. Triggers the caspase-independent apoptosis by altering mitochondrial membrane permeabilization (MMP) resulting in the release of PDCD8. This is Pleckstrin homology domain-containing family F member 1 (PLEKHF1) from Homo sapiens (Human).